The chain runs to 210 residues: Large ribosomal subunit protein bL25 (210 aa).

The tract at residues I186–S210 is disordered. A compositionally biased stretch (low complexity) spans N198–S210.

It belongs to the bacterial ribosomal protein bL25 family. CTC subfamily. In terms of assembly, part of the 50S ribosomal subunit; part of the 5S rRNA/L5/L18/L25 subcomplex. Contacts the 5S rRNA. Binds to the 5S rRNA independently of L5 and L18.

Functionally, this is one of the proteins that binds to the 5S RNA in the ribosome where it forms part of the central protuberance. This Ehrlichia chaffeensis (strain ATCC CRL-10679 / Arkansas) protein is Large ribosomal subunit protein bL25.